A 332-amino-acid polypeptide reads, in one-letter code: MDKVAEIWGTVPQYGQWALAGIGALYVATRVGAFLQLLLNAFILSGTNLRKYGKKGTWAVITGASDGLGKEFAQQLASKGFNLVLVSRTQSKLDVLARELELRWDGFKAKTFAMDFSKDDDSDYERLAELIKGLDIGILINNVGQSHSIPVPFLQTDRDELQNIVTINCLGTLKTTKVVAPILAQRKKGLILTMGSFAGVMPTPYLATYSGSKAFLQHWSSALSAELKDQGVDVHLVVSYLVTTAMSKIRRTSLLIPNPKQFVRAALGKVGLNSSEPFPNTYTPWWSHAVFKWVVENTVGAYSYFTLRLNKNMHIDIRNRALRKAAREAKKQ.

A helical membrane pass occupies residues 15–35; sequence GQWALAGIGALYVATRVGAFL. 9 residues coordinate NADP(+): V60, D115, D123, N142, K177, Y209, K213, V242, and T244. Y209 functions as the Proton donor in the catalytic mechanism. K213 (lowers pKa of active site Tyr) is an active-site residue.

The protein belongs to the short-chain dehydrogenases/reductases (SDR) family.

It localises to the endoplasmic reticulum membrane. It catalyses the reaction a very-long-chain (3R)-3-hydroxyacyl-CoA + NADP(+) = a very-long-chain 3-oxoacyl-CoA + NADPH + H(+). Its pathway is lipid metabolism; fatty acid biosynthesis. Component of the microsomal membrane bound fatty acid elongation system, which produces the 26-carbon very long-chain fatty acids (VLCFA) from palmitate. Catalyzes the reduction of the 3-ketoacyl-CoA intermediate that is formed in each cycle of fatty acid elongation. VLCFAs serve as precursors for ceramide and sphingolipids. The polypeptide is Very-long-chain 3-oxoacyl-CoA reductase (Neurospora crassa (strain ATCC 24698 / 74-OR23-1A / CBS 708.71 / DSM 1257 / FGSC 987)).